Here is a 48-residue protein sequence, read N- to C-terminus: Delta-actitoxin-Bcg1b (48 aa).

3 disulfide bridges follow: cysteine 4–cysteine 45, cysteine 6–cysteine 35, and cysteine 28–cysteine 46.

The protein belongs to the sea anemone sodium channel inhibitory toxin family. Type I subfamily.

It localises to the secreted. The protein resides in the nematocyst. Binds to the sodium channels Nav1.1/SCN1A (EC(50)=165 nM), Nav1.5/SCN5A (EC(50)=103 nM) and Nav1.6/SCN8A (EC(50)=133 nM), thereby delaying their inactivation. Also inhibits Nav1.2/SCN2A, Nav1.3/SCN3A, and Nav1.4/SCN4A, but to a lesser extent. Inhibits Nav1.5 differently from isoforms Nav1.1 and Nav1.6. In Nav1.5 the effect consists in a right-shift of inactivation; whereas in both Nav1.1 and Nav1.6 the effect consists in an incomplete inactivation. In Bunodosoma cangicum (Sea anemone), this protein is Delta-actitoxin-Bcg1b.